A 315-amino-acid chain; its full sequence is DNA-directed RNA polymerase subunit alpha (315 aa).

The alpha N-terminal domain (alpha-NTD) stretch occupies residues 1 to 228; the sequence is MLEIEKPVIQ…EHFKLFMTLT (228 aa). The segment at 245-315 is alpha C-terminal domain (alpha-CTD); the sequence is KEKALEMTIE…LGLNLRLNDE (71 aa).

It belongs to the RNA polymerase alpha chain family. As to quaternary structure, homodimer. The RNAP catalytic core consists of 2 alpha, 1 beta, 1 beta' and 1 omega subunit. When a sigma factor is associated with the core the holoenzyme is formed, which can initiate transcription.

It carries out the reaction RNA(n) + a ribonucleoside 5'-triphosphate = RNA(n+1) + diphosphate. In terms of biological role, DNA-dependent RNA polymerase catalyzes the transcription of DNA into RNA using the four ribonucleoside triphosphates as substrates. This Clostridium perfringens (strain ATCC 13124 / DSM 756 / JCM 1290 / NCIMB 6125 / NCTC 8237 / Type A) protein is DNA-directed RNA polymerase subunit alpha.